A 382-amino-acid chain; its full sequence is Sulfate adenylyltransferase (382 aa).

It belongs to the sulfate adenylyltransferase family.

The catalysed reaction is sulfate + ATP + H(+) = adenosine 5'-phosphosulfate + diphosphate. It functions in the pathway sulfur metabolism; hydrogen sulfide biosynthesis; sulfite from sulfate: step 1/3. This chain is Sulfate adenylyltransferase, found in Staphylothermus marinus (strain ATCC 43588 / DSM 3639 / JCM 9404 / F1).